Here is a 65-residue protein sequence, read N- to C-terminus: MLIIPIKDGENIDRALKRYKRKFDKTGVVRQLRKRQAFIKPSVINRAMIQKAAYVQNMREGLENM.

Belongs to the bacterial ribosomal protein bS21 family.

The protein is Small ribosomal subunit protein bS21 of Flavobacterium psychrophilum (strain ATCC 49511 / DSM 21280 / CIP 103535 / JIP02/86).